The sequence spans 309 residues: Aurora kinase C (309 aa).

Residues 1 to 33 (MSSPRAVVQLGKAQPAGEELATANQTAQQPSSP) are disordered. A compositionally biased stretch (polar residues) spans 22–32 (TANQTAQQPSS). The Protein kinase domain maps to 43–293 (FEIGRPLGKG…LAQILKHPWV (251 aa)). ATP is bound by residues 49–57 (LGKGKFGNV) and Lys72. Asp166 (proton acceptor) is an active-site residue. A Phosphothreonine; by PKA modification is found at Thr198. The segment at 292–309 (WVQAHSRRVLPPCAQMAS) is interaction with BIRC5.

This sequence belongs to the protein kinase superfamily. Ser/Thr protein kinase family. Aurora subfamily. Component of the chromosomal passenger complex (CPC) composed of at least BIRC5/survivin, CDCA8/borealin, INCENP, AURKB or AURKC; predominantly independent AURKB- and AURKC-containing complexes exist; in the complex interacts directly with BIRC5/survivin and INCENP. Interacts with TACC1. In terms of tissue distribution, isoform 1 and isoform 2 are expressed in testis. Elevated expression levels were seen only in a subset of cancer cell lines such as Hep-G2, Huh-7 and HeLa. Expression is maximum at M phase.

The protein resides in the nucleus. It is found in the chromosome. Its subcellular location is the centromere. It localises to the cytoplasm. The protein localises to the cytoskeleton. The protein resides in the spindle. The catalysed reaction is L-seryl-[protein] + ATP = O-phospho-L-seryl-[protein] + ADP + H(+). It carries out the reaction L-threonyl-[protein] + ATP = O-phospho-L-threonyl-[protein] + ADP + H(+). Okadaic acid, an inhibitor of protein phosphatase 1 (PP1), protein phosphatase 2A (PP2A) and protein phosphatase 5 (PP5), increases AURKC activity. AURKC is also stabilized through its interaction with INCENP, which also acts as an activator. Functionally, serine/threonine-protein kinase component of the chromosomal passenger complex (CPC), a complex that acts as a key regulator of mitosis. The CPC complex has essential functions at the centromere in ensuring correct chromosome alignment and segregation and is required for chromatin-induced microtubule stabilization and spindle assembly. Also plays a role in meiosis and more particularly in spermatogenesis. Has redundant cellular functions with AURKB and can rescue an AURKB knockdown. Like AURKB, AURKC phosphorylates histone H3 at 'Ser-10' and 'Ser-28'. AURKC phosphorylates the CPC complex subunits BIRC5/survivin and INCENP leading to increased AURKC activity. Phosphorylates TACC1, another protein involved in cell division, at 'Ser-228'. The polypeptide is Aurora kinase C (AURKC) (Homo sapiens (Human)).